A 138-amino-acid polypeptide reads, in one-letter code: ATP synthase epsilon chain (138 aa).

Belongs to the ATPase epsilon chain family. As to quaternary structure, F-type ATPases have 2 components, CF(1) - the catalytic core - and CF(0) - the membrane proton channel. CF(1) has five subunits: alpha(3), beta(3), gamma(1), delta(1), epsilon(1). CF(0) has three main subunits: a, b and c.

Its subcellular location is the cell inner membrane. Produces ATP from ADP in the presence of a proton gradient across the membrane. In Ruthia magnifica subsp. Calyptogena magnifica, this protein is ATP synthase epsilon chain.